Here is a 165-residue protein sequence, read N- to C-terminus: Coatomer subunit zeta (165 aa).

Belongs to the adaptor complexes small subunit family. Oligomeric complex that consists of at least the alpha, beta, beta', gamma, delta, epsilon and zeta subunits.

The protein resides in the cytoplasm. It localises to the golgi apparatus membrane. It is found in the cytoplasmic vesicle. The protein localises to the COPI-coated vesicle membrane. In terms of biological role, the coatomer is a cytosolic protein complex that binds to dilysine motifs and reversibly associates with Golgi non-clathrin-coated vesicles, which further mediate biosynthetic protein transport from the ER, via the Golgi up to the trans Golgi network. Coatomer complex is required for budding from Golgi membranes, and is essential for the retrograde Golgi-to-ER transport of dilysine-tagged proteins. The zeta subunit may be involved in regulating the coat assembly and, hence, the rate of biosynthetic protein transport due to its association-dissociation properties with the coatomer complex. The polypeptide is Coatomer subunit zeta (Encephalitozoon cuniculi (strain GB-M1) (Microsporidian parasite)).